We begin with the raw amino-acid sequence, 378 residues long: Quinolinate synthase (378 aa).

Iminosuccinate-binding residues include His59 and Ser80. Cys125 serves as a coordination point for [4Fe-4S] cluster. Iminosuccinate is bound by residues 151–153 (YAN) and Ser168. Position 212 (Cys212) interacts with [4Fe-4S] cluster. Residues 238-240 (HPE) and Thr255 contribute to the iminosuccinate site. Cys309 lines the [4Fe-4S] cluster pocket.

It belongs to the quinolinate synthase family. Type 1 subfamily. It depends on [4Fe-4S] cluster as a cofactor.

It localises to the cytoplasm. It catalyses the reaction iminosuccinate + dihydroxyacetone phosphate = quinolinate + phosphate + 2 H2O + H(+). It functions in the pathway cofactor biosynthesis; NAD(+) biosynthesis; quinolinate from iminoaspartate: step 1/1. Its function is as follows. Catalyzes the condensation of iminoaspartate with dihydroxyacetone phosphate to form quinolinate. The chain is Quinolinate synthase from Burkholderia mallei (strain NCTC 10247).